Here is a 351-residue protein sequence, read N- to C-terminus: Glycerol-1-phosphate dehydrogenase [NAD(P)+] (351 aa).

Residues 97–101 and 119–122 each bind NAD(+); these read GKVID and TSPS. Aspartate 124 is a binding site for substrate. Serine 128 lines the NAD(+) pocket. Aspartate 171 contributes to the substrate binding site. The Zn(2+) site is built by aspartate 171 and histidine 251. Histidine 255 lines the substrate pocket. A Zn(2+)-binding site is contributed by histidine 267.

Belongs to the glycerol-1-phosphate dehydrogenase family. In terms of assembly, homodimer. Zn(2+) serves as cofactor.

It is found in the cytoplasm. It catalyses the reaction sn-glycerol 1-phosphate + NAD(+) = dihydroxyacetone phosphate + NADH + H(+). The catalysed reaction is sn-glycerol 1-phosphate + NADP(+) = dihydroxyacetone phosphate + NADPH + H(+). It functions in the pathway membrane lipid metabolism; glycerophospholipid metabolism. Catalyzes the NAD(P)H-dependent reduction of dihydroxyacetonephosphate (DHAP or glycerone phosphate) to glycerol 1-phosphate (G1P). The G1P thus generated is used as the glycerophosphate backbone of phospholipids in the cellular membranes of Archaea. The sequence is that of Glycerol-1-phosphate dehydrogenase [NAD(P)+] from Saccharolobus solfataricus (strain ATCC 35092 / DSM 1617 / JCM 11322 / P2) (Sulfolobus solfataricus).